Consider the following 1788-residue polypeptide: U3 small nucleolar RNA-associated protein 10 (1788 aa).

One copy of the HEAT 1 repeat lies at L585–T622. The segment at P884–D905 is disordered. 6 HEAT repeats span residues A926–S962, Q1049–H1086, L1257–I1294, E1301–K1339, E1703–E1740, and Q1744–E1781.

Belongs to the HEATR1/UTP10 family. As to quaternary structure, component of the ribosomal small subunit (SSU) processome.

The protein localises to the nucleus. Its subcellular location is the nucleolus. Its function is as follows. Involved in nucleolar processing of pre-18S ribosomal RNA. Involved in ribosome biosynthesis. This Neurospora crassa (strain ATCC 24698 / 74-OR23-1A / CBS 708.71 / DSM 1257 / FGSC 987) protein is U3 small nucleolar RNA-associated protein 10 (rbg-5).